Here is a 389-residue protein sequence, read N- to C-terminus: Na(+)/H(+) antiporter NhaA (389 aa).

Transmembrane regions (helical) follow at residues 14–34, 59–79, 95–115, 124–144, 154–174, 177–197, 213–233, 261–281, 290–310, 328–348, and 363–383; these read AGGILLLVAVVFAMLMANSPL, LLLWINDGLMALFFLLIGLEV, SLPSFAAIGGMLVPAGIYLLF, AGWAIPAATDIAFALGIMALL, VFLLALAIIDDLGVIVIIALF, SDLSTISLAIASVAILGLVGL, LILWVAVLKSGVHATLAGVII, FLILPVFAFANAGVALGNMSL, IGIALGLILGKPIGVMLFSFI, IAPVAAMCGIGFTMSMFIASL, and LGTLIGSFIAALVGYFWLSKV.

It belongs to the NhaA Na(+)/H(+) (TC 2.A.33) antiporter family.

Its subcellular location is the cell inner membrane. The enzyme catalyses Na(+)(in) + 2 H(+)(out) = Na(+)(out) + 2 H(+)(in). In terms of biological role, na(+)/H(+) antiporter that extrudes sodium in exchange for external protons. This is Na(+)/H(+) antiporter NhaA from Shewanella sp. (strain W3-18-1).